Reading from the N-terminus, the 86-residue chain is Exodeoxyribonuclease 7 small subunit (86 aa).

Residues 67-86 (LSDPAQPEASEPFDPPSHDG) form a disordered region.

Belongs to the XseB family. As to quaternary structure, heterooligomer composed of large and small subunits.

The protein localises to the cytoplasm. The catalysed reaction is Exonucleolytic cleavage in either 5'- to 3'- or 3'- to 5'-direction to yield nucleoside 5'-phosphates.. In terms of biological role, bidirectionally degrades single-stranded DNA into large acid-insoluble oligonucleotides, which are then degraded further into small acid-soluble oligonucleotides. The chain is Exodeoxyribonuclease 7 small subunit from Stenotrophomonas maltophilia (strain K279a).